Consider the following 516-residue polypeptide: GMP synthase [glutamine-hydrolyzing] (516 aa).

One can recognise a Glutamine amidotransferase type-1 domain in the interval 8–198; that stretch reads KILILDFGSQ…VVNICGCDTL (191 aa). Catalysis depends on Cys84, which acts as the Nucleophile. Active-site residues include His172 and Glu174. In terms of domain architecture, GMPS ATP-PPase spans 199–391; the sequence is WNIENIIEND…LGLPYNMLYR (193 aa). Residue 226 to 232 participates in ATP binding; it reads SGGVDSS.

Homodimer.

It carries out the reaction XMP + L-glutamine + ATP + H2O = GMP + L-glutamate + AMP + diphosphate + 2 H(+). Its pathway is purine metabolism; GMP biosynthesis; GMP from XMP (L-Gln route): step 1/1. Its function is as follows. Catalyzes the synthesis of GMP from XMP. The sequence is that of GMP synthase [glutamine-hydrolyzing] from Francisella tularensis subsp. tularensis (strain FSC 198).